The chain runs to 696 residues: C2 domain-containing protein 2 (696 aa).

A helical transmembrane segment spans residues 8-28 (VQWLFLVSLFVAALGTVGLYL). In terms of domain architecture, SMP-LBD spans 45 to 238 (EPDELRRRES…PTQVKEAQSL (194 aa)). Serine 54 is subject to Phosphoserine. In terms of domain architecture, C2 spans 241-357 (PSSTAQEPCP…RKQPNGPQTF (117 aa)). Phosphoserine is present on serine 436. Phosphothreonine is present on threonine 440. Positions 551 to 611 (ATEASATTPP…DGDELSESSL (61 aa)) are disordered. A compositionally biased stretch (basic and acidic residues) spans 573–588 (KPRENDLDSWELEKES). The residue at position 581 (serine 581) is a Phosphoserine.

It is found in the membrane. The sequence is that of C2 domain-containing protein 2 from Mus musculus (Mouse).